A 165-amino-acid chain; its full sequence is Phosphopantetheine adenylyltransferase (165 aa).

This sequence belongs to the eukaryotic CoaD family.

The protein localises to the cytoplasm. It catalyses the reaction (R)-4'-phosphopantetheine + ATP + H(+) = 3'-dephospho-CoA + diphosphate. It participates in cofactor biosynthesis; coenzyme A biosynthesis. Its function is as follows. Reversibly transfers an adenylyl group from ATP to 4'-phosphopantetheine, yielding dephospho-CoA (dPCoA) and pyrophosphate. The protein is Phosphopantetheine adenylyltransferase of Thermococcus kodakarensis (strain ATCC BAA-918 / JCM 12380 / KOD1) (Pyrococcus kodakaraensis (strain KOD1)).